A 145-amino-acid polypeptide reads, in one-letter code: Cytochrome b (145 aa).

The chain crosses the membrane as a helical span at residues 38–58 (FFALHFLLPFVLAALALMHLI). Residues histidine 42 and histidine 56 each contribute to the heme b site. Histidine 61 provides a ligand contact to a ubiquinone. The helical transmembrane segment at 85–105 (FIFKDLVTIFIFFIVLSIFVF) threads the bilayer.

Belongs to the cytochrome b family. Fungal cytochrome b-c1 complex contains 10 subunits; 3 respiratory subunits, 2 core proteins and 5 low-molecular weight proteins. Cytochrome b-c1 complex is a homodimer. Heme b serves as cofactor.

The protein resides in the mitochondrion inner membrane. Component of the ubiquinol-cytochrome c reductase complex (complex III or cytochrome b-c1 complex) that is part of the mitochondrial respiratory chain. The b-c1 complex mediates electron transfer from ubiquinol to cytochrome c. Contributes to the generation of a proton gradient across the mitochondrial membrane that is then used for ATP synthesis. The polypeptide is Cytochrome b (cob) (Aspergillus flavus).